The primary structure comprises 349 residues: Micronemal protein 6 (349 aa).

The signal sequence occupies residues 1-23 (MRLFRCCAAAVVAAESLLWLKNG). EGF-like domains follow at residues 36–80 (IADN…VTCM), 96–134 (TPAA…SLDG), and 147–192 (GCEE…ITCK). Intrachain disulfides connect Cys-40/Cys-53, Cys-45/Cys-62, Cys-64/Cys-79, Cys-100/Cys-113, Cys-105/Cys-122, Cys-124/Cys-140, Cys-148/Cys-162, Cys-153/Cys-173, and Cys-175/Cys-191. The tract at residues 194-291 (VPPHYRKPPF…EEGSGHAGAI (98 aa)) is disordered. The interval 204–283 (EFGKGGHPVD…SEEQGKEREE (80 aa)) is acidic domain. Composition is skewed to basic and acidic residues over residues 210-247 (HPVD…RTPL) and 276-285 (EQGKEREEGS). A helical transmembrane segment spans residues 290 to 310 (AIAGGVIGGLLLLSAAGAGVA).

As to quaternary structure, interacts directly with MIC1. Part of the MIC6-MIC1-MIC4 complex. Post-translationally, subject to proteolytic processing involving both the N-terminus and the C-terminus. The first EGF-like domain (EGF-like domain 1) is removed by proteolytic cleavage by ASP3 and is not present in the mature protein. Released as soluble 35 kDa protein after proteolytic processing at the C-terminus.

The protein resides in the cytoplasmic vesicle. It is found in the secretory vesicle. It localises to the microneme membrane. Its subcellular location is the secreted. In terms of biological role, escorter protein required for import of MIC1 and MIC4 adhesins into the microneme. This is Micronemal protein 6 from Toxoplasma gondii.